A 377-amino-acid polypeptide reads, in one-letter code: uncharacterized protein (377 aa).

Transmembrane regions (helical) follow at residues 4–24 (LLTP…LLGT), 41–61 (ASFG…FPIT), 85–105 (IAAL…FLFG), 134–154 (FHAM…IATV), 159–179 (VYVH…PFLL), 192–212 (GAVG…IALA), 278–298 (VFGI…AGFV), 301–321 (GVGY…DLVV), 327–347 (IASV…AIGL), and 356–376 (LCFF…PVLK).

This sequence to R.meliloti MosC.

It localises to the cell membrane. Functionally, could be involved in a transport system. This is an uncharacterized protein from Sinorhizobium fredii (strain NBRC 101917 / NGR234).